Consider the following 343-residue polypeptide: Methionine import ATP-binding protein MetN (343 aa).

One can recognise an ABC transporter domain in the interval 2 to 241; that stretch reads IKLSNITKVF…PKTPLAQKFI (240 aa). 38–45 provides a ligand contact to ATP; the sequence is GASGAGKS.

Belongs to the ABC transporter superfamily. Methionine importer (TC 3.A.1.24) family. In terms of assembly, the complex is composed of two ATP-binding proteins (MetN), two transmembrane proteins (MetI) and a solute-binding protein (MetQ).

The protein localises to the cell inner membrane. It carries out the reaction L-methionine(out) + ATP + H2O = L-methionine(in) + ADP + phosphate + H(+). It catalyses the reaction D-methionine(out) + ATP + H2O = D-methionine(in) + ADP + phosphate + H(+). Its function is as follows. Part of the ABC transporter complex MetNIQ involved in methionine import. Responsible for energy coupling to the transport system. This is Methionine import ATP-binding protein MetN from Shigella boydii serotype 4 (strain Sb227).